A 165-amino-acid polypeptide reads, in one-letter code: Myosin regulatory light chain 2B, cardiac muscle isoform (165 aa).

Residue Ala2 is modified to N,N,N-trimethylalanine. EF-hand domains are found at residues 23–58 (TQIQ…LGRL), 93–128 (DPEE…QEGR), and 129–164 (FSQE…GEEK). Ca(2+) is bound by residues Asp36, Asn38, Asp40, and Asp47.

As to quaternary structure, myosin is a hexamer of 2 heavy chains and 4 light chains. Post-translationally, the N-terminus is blocked. N,N,N-trimethylalanine, found in other myosin light chains would not have been detected in the N-terminal tryptic peptide in PubMed:7319048 because it would remain trimethylated and ninhydrin negative after hydrolysis.

The chain is Myosin regulatory light chain 2B, cardiac muscle isoform from Gallus gallus (Chicken).